The sequence spans 501 residues: Aerobic glycerol-3-phosphate dehydrogenase (501 aa).

Residue 5 to 33 (DLIVIGGGINGAGIAADAAGRGLSVLMLE) participates in FAD binding.

The protein belongs to the FAD-dependent glycerol-3-phosphate dehydrogenase family. Requires FAD as cofactor.

It is found in the cytoplasm. It catalyses the reaction a quinone + sn-glycerol 3-phosphate = dihydroxyacetone phosphate + a quinol. It functions in the pathway polyol metabolism; glycerol degradation via glycerol kinase pathway; glycerone phosphate from sn-glycerol 3-phosphate (aerobic route): step 1/1. Conversion of glycerol 3-phosphate to dihydroxyacetone. Uses molecular oxygen or nitrate as electron acceptor. The polypeptide is Aerobic glycerol-3-phosphate dehydrogenase (glpD) (Escherichia coli (strain K12)).